Reading from the N-terminus, the 463-residue chain is NADH-quinone oxidoreductase subunit N (463 aa).

Transmembrane regions (helical) follow at residues 2-22 (NTLI…ILNF), 25-45 (GIVP…FYEF), 61-81 (FSTA…ALSH), 91-110 (ISDF…AMVS), 114-133 (LAMF…VLAA), 149-169 (FLMG…IYGA), 189-209 (IWFP…IAAV), 223-243 (PALT…ATLF), 264-284 (FTNV…IMAL), 292-312 (MLAF…LTIA), 317-337 (VLLY…SVIL), 362-382 (AAIL…SGFF), 395-415 (GYVA…GYYF), and 434-454 (PFLI…LGLF).

The protein belongs to the complex I subunit 2 family. As to quaternary structure, NDH-1 is composed of 14 different subunits. Subunits NuoA, H, J, K, L, M, N constitute the membrane sector of the complex.

It localises to the cell inner membrane. It catalyses the reaction a quinone + NADH + 5 H(+)(in) = a quinol + NAD(+) + 4 H(+)(out). NDH-1 shuttles electrons from NADH, via FMN and iron-sulfur (Fe-S) centers, to quinones in the respiratory chain. The immediate electron acceptor for the enzyme in this species is believed to be a menaquinone. Couples the redox reaction to proton translocation (for every two electrons transferred, four hydrogen ions are translocated across the cytoplasmic membrane), and thus conserves the redox energy in a proton gradient. This is NADH-quinone oxidoreductase subunit N from Flavobacterium johnsoniae (strain ATCC 17061 / DSM 2064 / JCM 8514 / BCRC 14874 / CCUG 350202 / NBRC 14942 / NCIMB 11054 / UW101) (Cytophaga johnsonae).